We begin with the raw amino-acid sequence, 249 residues long: ATP synthase subunit a, chloroplastic (249 aa).

5 helical membrane-spanning segments follow: residues 40–60 (QVLI…IVAV), 97–117 (VPFI…GALL), 136–156 (INTT…AGLS), 201–221 (LVVV…VMFL), and 222–242 (GLFT…AYIG).

The protein belongs to the ATPase A chain family. F-type ATPases have 2 components, CF(1) - the catalytic core - and CF(0) - the membrane proton channel. CF(1) has five subunits: alpha(3), beta(3), gamma(1), delta(1), epsilon(1). CF(0) has four main subunits: a, b, b' and c.

The protein resides in the plastid. It is found in the chloroplast thylakoid membrane. Its function is as follows. Key component of the proton channel; it plays a direct role in the translocation of protons across the membrane. In Manihot esculenta (Cassava), this protein is ATP synthase subunit a, chloroplastic.